We begin with the raw amino-acid sequence, 558 residues long: Suppressor of zyg-1 protein 20 (558 aa).

Positions 45–146 (KVKAEESSGV…ARNRILGTEY (102 aa)) constitute an SUZ domain. Disordered stretches follow at residues 50 to 132 (ESSG…ERQA), 205 to 241 (FTQP…QQSL), and 374 to 558 (QRNQ…NRPQ). Residues 69–81 (EEPKRVFLRRPKD) show a composition bias toward basic and acidic residues. Over residues 94–109 (PPTSADTEEQPVTNVR) the composition is skewed to polar residues. Basic and acidic residues predominate over residues 117–131 (NQKEKQPAPTYEERQ). 2 stretches are compositionally biased toward low complexity: residues 374 to 394 (QRNQ…QNRQ) and 424 to 477 (NNGQ…QQQQ). Polar residues-rich tracts occupy residues 478 to 508 (NKSG…SQNP) and 545 to 558 (SASQ…NRPQ).

As to quaternary structure, interacts (via C-terminus) with atx-2 (via C-terminus); the interaction is RNA independent. Interacts with let-92. In terms of processing, phosphorylated. May be dephosphorylated by let-92.

Its subcellular location is the cytoplasm. It localises to the cytoskeleton. The protein localises to the microtubule organizing center. The protein resides in the centrosome. It is found in the centriole. Its subcellular location is the nucleus. It localises to the nucleolus. The protein localises to the chromosome. Its function is as follows. RNA binding protein that is required for normal cell division and cytokinesis during embryonic development. Functions with RNA-binding protein atx-2 to ensure embryonic cell division, and to this end, plays a role in the regulation of centrosome assembly, position and size, and in astral microtubule outgrowth and nucleation. Furthermore, negatively regulates the levels of the protein kinase zyg-1 at the centrosome. Also involved in ensuring centrosome attachment to the nuclear envelope. The sequence is that of Suppressor of zyg-1 protein 20 from Caenorhabditis elegans.